The sequence spans 265 residues: Tryptophan synthase alpha chain (265 aa).

Catalysis depends on proton acceptor residues glutamate 49 and aspartate 60.

Belongs to the TrpA family. As to quaternary structure, tetramer of two alpha and two beta chains.

It catalyses the reaction (1S,2R)-1-C-(indol-3-yl)glycerol 3-phosphate + L-serine = D-glyceraldehyde 3-phosphate + L-tryptophan + H2O. The protein operates within amino-acid biosynthesis; L-tryptophan biosynthesis; L-tryptophan from chorismate: step 5/5. Functionally, the alpha subunit is responsible for the aldol cleavage of indoleglycerol phosphate to indole and glyceraldehyde 3-phosphate. This chain is Tryptophan synthase alpha chain, found in Paracoccus denitrificans (strain Pd 1222).